The sequence spans 472 residues: Argininosuccinate lyase (472 aa).

It belongs to the lyase 1 family. Argininosuccinate lyase subfamily.

Its subcellular location is the cytoplasm. The enzyme catalyses 2-(N(omega)-L-arginino)succinate = fumarate + L-arginine. Its pathway is amino-acid biosynthesis; L-arginine biosynthesis; L-arginine from L-ornithine and carbamoyl phosphate: step 3/3. The polypeptide is Argininosuccinate lyase (Mycobacterium avium (strain 104)).